The primary structure comprises 289 residues: D-alanine aminotransferase (289 aa).

Y31 provides a ligand contact to substrate. R50 contributes to the pyridoxal 5'-phosphate binding site. Residues R99 and H101 each coordinate substrate. The Proton acceptor role is filled by K147. At K147 the chain carries N6-(pyridoxal phosphate)lysine. E179 is a binding site for pyridoxal 5'-phosphate.

This sequence belongs to the class-IV pyridoxal-phosphate-dependent aminotransferase family. Homodimer. Requires pyridoxal 5'-phosphate as cofactor.

The enzyme catalyses D-alanine + 2-oxoglutarate = D-glutamate + pyruvate. Functionally, acts on the D-isomers of alanine, leucine, aspartate, glutamate, aminobutyrate, norvaline and asparagine. The enzyme transfers an amino group from a substrate D-amino acid to the pyridoxal phosphate cofactor to form pyridoxamine and an alpha-keto acid in the first half-reaction. The second half-reaction is the reverse of the first, transferring the amino group from the pyridoxamine to a second alpha-keto acid to form the product D-amino acid via a ping-pong mechanism. This is an important process in the formation of D-alanine and D-glutamate, which are essential bacterial cell wall components. The sequence is that of D-alanine aminotransferase (dat) from Listeria monocytogenes serotype 4b (strain F2365).